The primary structure comprises 388 residues: Na(+)/H(+) antiporter NhaA (388 aa).

Residues 1–11 (MKHLHRFFSSD) are Cytoplasmic-facing. A helical membrane pass occupies residues 12-31 (ASGGIILIIAAVLAMIMANS). The Periplasmic segment spans residues 32 to 58 (GATSGWYHDFLETPVQLRVGTLEINKN). The chain crosses the membrane as a helical span at residues 59-80 (MLLWINDALMAVFFLLVGLEVK). The Cytoplasmic portion of the chain corresponds to 81–96 (RELMQGSLASLRQAAF). Residues 97–116 (PVIAAIGGMIVPALLYLAFN) form a helical membrane-spanning segment. The Periplasmic segment spans residues 117–122 (YADPIT). A helical membrane pass occupies residues 123–130 (REGWAIPA). Over 131-154 (ATDIAFALGVLALLGSRVPLALKI) the chain is Cytoplasmic. Residues 155–176 (FLMALAIIDDLGAIIIIALFYT) traverse the membrane as a helical segment. Topologically, residues 177–180 (NDLS) are periplasmic. Residues 181–200 (MASLGVAAVAIAVLVVLNLC) form a helical membrane-spanning segment. Residues 201 to 204 (GVRR) lie on the Cytoplasmic side of the membrane. The chain crosses the membrane as a helical span at residues 205–222 (TGVYILVGVVLWTAVLKS). Residue Gly223 is a topological domain, periplasmic. A helical membrane pass occupies residues 224 to 236 (VHATLAGVIVGFF). Residues 237 to 253 (IPLKEKHGRSPAKRLEH) are Cytoplasmic-facing. Residues 254-272 (VLHPWVAYLILPLFAFANA) traverse the membrane as a helical segment. The Periplasmic portion of the chain corresponds to 273-286 (GVSLQGVTLEGLTS). A helical transmembrane segment spans residues 287-310 (ILPLGIIAGLLIGKPLGISLFCWL). Over 311–339 (ALRLKLAHLPEGTTYQQIMAVGILCGIGF) the chain is Cytoplasmic. Residues 340-350 (TMSIFIASLAF) traverse the membrane as a helical segment. Topologically, residues 351-357 (GSVDPEL) are periplasmic. Residues 358–380 (INWAKLGILVGSISSAVIGYSWL) form a helical membrane-spanning segment. Topologically, residues 381–388 (RVRLRPSV) are cytoplasmic.

It belongs to the NhaA Na(+)/H(+) (TC 2.A.33) antiporter family.

It is found in the cell inner membrane. It catalyses the reaction Na(+)(in) + 2 H(+)(out) = Na(+)(out) + 2 H(+)(in). Functionally, na(+)/H(+) antiporter that extrudes sodium in exchange for external protons. In Escherichia coli O1:K1 / APEC, this protein is Na(+)/H(+) antiporter NhaA.